Here is a 176-residue protein sequence, read N- to C-terminus: Lipoprotein signal peptidase (176 aa).

3 helical membrane passes run 12–32 (WYWVVVLVFIADQVSKQWVLT), 67–87 (WQKWLFTFIAVAFSTILTIWL), and 94–114 (VWRLNLAYTLVIGGALGNLID). Active-site residues include aspartate 123 and aspartate 141. Residues 133–153 (HFAAFNIADSAICIGAGLIIL) form a helical membrane-spanning segment.

The protein belongs to the peptidase A8 family.

Its subcellular location is the cell inner membrane. The enzyme catalyses Release of signal peptides from bacterial membrane prolipoproteins. Hydrolyzes -Xaa-Yaa-Zaa-|-(S,diacylglyceryl)Cys-, in which Xaa is hydrophobic (preferably Leu), and Yaa (Ala or Ser) and Zaa (Gly or Ala) have small, neutral side chains.. The protein operates within protein modification; lipoprotein biosynthesis (signal peptide cleavage). In terms of biological role, this protein specifically catalyzes the removal of signal peptides from prolipoproteins. This is Lipoprotein signal peptidase from Shewanella sediminis (strain HAW-EB3).